Here is a 664-residue protein sequence, read N- to C-terminus: Methionine--tRNA ligase (664 aa).

The 'HIGH' region motif lies at 13 to 23 (PYTNGPCHIGH). Zn(2+)-binding residues include C144, C147, C156, and C160. The short motif at 327-331 (KFSKS) is the 'KMSKS' region element. K330 is a binding site for ATP. Residues 566 to 664 (EFGNLDIRIA…RPVKPGTKIR (99 aa)) enclose the tRNA-binding domain.

It belongs to the class-I aminoacyl-tRNA synthetase family. MetG type 1 subfamily. In terms of assembly, homodimer. It depends on Zn(2+) as a cofactor.

The protein resides in the cytoplasm. The enzyme catalyses tRNA(Met) + L-methionine + ATP = L-methionyl-tRNA(Met) + AMP + diphosphate. Its function is as follows. Is required not only for elongation of protein synthesis but also for the initiation of all mRNA translation through initiator tRNA(fMet) aminoacylation. This chain is Methionine--tRNA ligase, found in Methanoculleus marisnigri (strain ATCC 35101 / DSM 1498 / JR1).